The sequence spans 448 residues: Tubulin alpha chain (448 aa).

GTP is bound by residues glutamine 12, glutamate 73, serine 142, glycine 146, threonine 147, threonine 181, asparagine 208, and asparagine 230. Glutamate 73 contributes to the Mg(2+) binding site. Glutamate 256 is a catalytic residue.

Belongs to the tubulin family. As to quaternary structure, dimer of alpha and beta chains. A typical microtubule is a hollow water-filled tube with an outer diameter of 25 nm and an inner diameter of 15 nM. Alpha-beta heterodimers associate head-to-tail to form protofilaments running lengthwise along the microtubule wall with the beta-tubulin subunit facing the microtubule plus end conferring a structural polarity. Microtubules usually have 13 protofilaments but different protofilament numbers can be found in some organisms and specialized cells. Mg(2+) is required as a cofactor.

Its subcellular location is the cytoplasm. The protein resides in the cytoskeleton. The catalysed reaction is GTP + H2O = GDP + phosphate + H(+). Tubulin is the major constituent of microtubules, a cylinder consisting of laterally associated linear protofilaments composed of alpha- and beta-tubulin heterodimers. Microtubules grow by the addition of GTP-tubulin dimers to the microtubule end, where a stabilizing cap forms. Below the cap, tubulin dimers are in GDP-bound state, owing to GTPase activity of alpha-tubulin. The chain is Tubulin alpha chain (TUB1) from Eremothecium gossypii (strain ATCC 10895 / CBS 109.51 / FGSC 9923 / NRRL Y-1056) (Yeast).